A 610-amino-acid polypeptide reads, in one-letter code: UvrABC system protein C (610 aa).

Residues 16–94 enclose the GIY-YIG domain; sequence SQPGVYRMYD…IKLYQPRYNV (79 aa). The region spanning 204–239 is the UVR domain; the sequence is QQVLTQLISRMEEASRLLHFEDAARIRDQIQAVRRV.

Belongs to the UvrC family. In terms of assembly, interacts with UvrB in an incision complex.

It is found in the cytoplasm. Its function is as follows. The UvrABC repair system catalyzes the recognition and processing of DNA lesions. UvrC both incises the 5' and 3' sides of the lesion. The N-terminal half is responsible for the 3' incision and the C-terminal half is responsible for the 5' incision. In Yersinia enterocolitica serotype O:8 / biotype 1B (strain NCTC 13174 / 8081), this protein is UvrABC system protein C.